The sequence spans 217 residues: Chaperone protein TorD (217 aa).

Belongs to the TorD/DmsD family. TorD subfamily.

The protein localises to the cytoplasm. In terms of biological role, involved in the biogenesis of TorA. Acts on TorA before the insertion of the molybdenum cofactor and, as a result, probably favors a conformation of the apoenzyme that is competent for acquiring the cofactor. This is Chaperone protein TorD from Shewanella oneidensis (strain ATCC 700550 / JCM 31522 / CIP 106686 / LMG 19005 / NCIMB 14063 / MR-1).